The primary structure comprises 447 residues: MSEYQVAYLPIGVPTFHLESAQAGFEKSVRLLTSLSTHVVCPQKMLLTIEELNTFLDMICPQLLIIQNITFANAAYASQIRHRFSCPTLLWTLREPVIDGGRLRLNSLTGAYSAANAMRALGDDRFAYVFGAPEEEAVIHKIHAFLRAGEVYHKLHSLKMAAVGHTPQGFGFGRALDSELLHTFGVTLESIETRELMEKAVSYTEEECADCRKAAEQAMTGLENTPAKNRDAFVRLYKAYDDYVKANGIGALSSRCWPDFFTAYGTPVCSVLAMLNDNLIASACESDVYGALSMYIGTQLTGLPTFFGDPVSLDEAENTITYWHCGTAACSLARADTGAQVGVHPNRKIGPTMEFGCRPAEQATVFRVGRKPDGTFRLLILPGRALDKPKQFCGTSVVVQPKADALRVVESSVKAGWEPHFTVIYGDVKDELLALADMLRLEAEVYE.

The protein belongs to the SqvD family.

It carries out the reaction 6-sulfo-beta-D-quinovose = 6-deoxy-6-sulfo-D-fructose. In terms of biological role, part of the sulfo-TK pathway, a D-sulfoquinovose degradation pathway that produces 2-hydroxyethane-1-sulfonate (isethionate). Catalyzes the isomerization of sulfoquinovose (SQ) to 6-deoxy-6-sulfo-D-fructose (SF). In Clostridium sp. (strain MSTE9), this protein is Sulfoquinovose isomerase.